The sequence spans 64 residues: MSKLGVFLTICLLLFPLTALQLDGDQPADKPAQRKLKILPKRKHWTRFTCCYEEECPPSCKLCC.

The first 19 residues, 1-19, serve as a signal peptide directing secretion; the sequence is MSKLGVFLTICLLLFPLTA. Positions 20–49 are excised as a propeptide; the sequence is LQLDGDQPADKPAQRKLKILPKRKHWTRFT. Disulfide bonds link Cys-50–Cys-64, Cys-51–Cys-60, and Cys-56–Cys-63.

It belongs to the conotoxin M superfamily. As to expression, expressed by the venom duct.

The protein resides in the secreted. In Conus regius (Crown cone), this protein is Conotoxin reg3.16.